Here is a 350-residue protein sequence, read N- to C-terminus: Formimidoylglutamase (350 aa).

Mn(2+) is bound by residues H130, D165, H167, D169, D269, and D271.

It belongs to the arginase family. Mn(2+) serves as cofactor.

It carries out the reaction N-formimidoyl-L-glutamate + H2O = formamide + L-glutamate. It participates in amino-acid degradation; L-histidine degradation into L-glutamate; L-glutamate from N-formimidoyl-L-glutamate (hydrolase route): step 1/1. Catalyzes the conversion of N-formimidoyl-L-glutamate to L-glutamate and formamide. The protein is Formimidoylglutamase of Aliivibrio fischeri (strain ATCC 700601 / ES114) (Vibrio fischeri).